The sequence spans 95 residues: Osteocalcin (95 aa).

The N-terminal stretch at 1-23 (MRTIFLLTLLTLAALCLSDLTDA) is a signal peptide. A propeptide spanning residues 24-49 (KPSGPESDKAFMSKQEGNKVVNRLRR) is cleaved from the precursor. The Gla domain maps to 46-92 (RLRRYLGASVPSPDPLEPTREQCELNPACDELSDQYGLKTAYKRIYG). Positions 62, 66, 69, and 75 each coordinate Ca(2+). Residues glutamate 62, glutamate 66, and glutamate 69 each carry the 4-carboxyglutamate modification. A disulfide bridge connects residues cysteine 68 and cysteine 74.

Belongs to the osteocalcin/matrix Gla protein family. In terms of processing, gamma-carboxyglutamate residues are formed by vitamin K dependent carboxylation by GGCX. These residues are essential for the binding of calcium. Carboxylated in a Ptprv/Esp-dependent process. Decarboxylation promotes the hormone activity. Bone.

Its subcellular location is the secreted. Functionally, the carboxylated form is one of the main organic components of the bone matrix, which constitutes 1-2% of the total bone protein: it acts as a negative regulator of bone formation and is required to limit bone formation without impairing bone resorption or mineralization. The carboxylated form binds strongly to apatite and calcium. Its function is as follows. The uncarboxylated form acts as a hormone secreted by osteoblasts, which regulates different cellular processes, such as energy metabolism, male fertility and brain development. Regulates of energy metabolism by acting as a hormone favoring pancreatic beta-cell proliferation, insulin secretion and sensitivity and energy expenditure. Uncarboxylated osteocalcin hormone also promotes testosterone production in the testes: acts as a ligand for G protein-coupled receptor GPRC6A at the surface of Leydig cells, initiating a signaling response that promotes the expression of enzymes required for testosterone synthesis in a CREB-dependent manner. Also acts as a regulator of brain development: osteocalcin hormone crosses the blood-brain barrier and acts as a ligand for GPR158 on neurons, initiating a signaling response that prevents neuronal apoptosis in the hippocampus, favors the synthesis of all monoamine neurotransmitters and inhibits that of gamma-aminobutyric acid (GABA). Osteocalcin also crosses the placenta during pregnancy and maternal osteocalcin is required for fetal brain development. In Mus musculus (Mouse), this protein is Osteocalcin.